Here is a 121-residue protein sequence, read N- to C-terminus: Large ribosomal subunit protein uL14 (121 aa).

It belongs to the universal ribosomal protein uL14 family. In terms of assembly, part of the 50S ribosomal subunit. Forms a cluster with proteins L3 and L19. In the 70S ribosome, L14 and L19 interact and together make contacts with the 16S rRNA in bridges B5 and B8.

In terms of biological role, binds to 23S rRNA. Forms part of two intersubunit bridges in the 70S ribosome. This chain is Large ribosomal subunit protein uL14, found in Azobacteroides pseudotrichonymphae genomovar. CFP2.